We begin with the raw amino-acid sequence, 254 residues long: Phosphoribosylaminoimidazole-succinocarboxamide synthase 1 (254 aa).

Belongs to the SAICAR synthetase family.

It carries out the reaction 5-amino-1-(5-phospho-D-ribosyl)imidazole-4-carboxylate + L-aspartate + ATP = (2S)-2-[5-amino-1-(5-phospho-beta-D-ribosyl)imidazole-4-carboxamido]succinate + ADP + phosphate + 2 H(+). It participates in purine metabolism; IMP biosynthesis via de novo pathway; 5-amino-1-(5-phospho-D-ribosyl)imidazole-4-carboxamide from 5-amino-1-(5-phospho-D-ribosyl)imidazole-4-carboxylate: step 1/2. The chain is Phosphoribosylaminoimidazole-succinocarboxamide synthase 1 (purC1) from Agrobacterium fabrum (strain C58 / ATCC 33970) (Agrobacterium tumefaciens (strain C58)).